We begin with the raw amino-acid sequence, 422 residues long: Histidine--tRNA ligase (422 aa).

The protein belongs to the class-II aminoacyl-tRNA synthetase family. Homodimer.

The protein localises to the cytoplasm. It carries out the reaction tRNA(His) + L-histidine + ATP = L-histidyl-tRNA(His) + AMP + diphosphate + H(+). The protein is Histidine--tRNA ligase of Vesicomyosocius okutanii subsp. Calyptogena okutanii (strain HA).